Reading from the N-terminus, the 108-residue chain is Protein Asterix (108 aa).

A disordered region spans residues 1 to 29; that stretch reads MNMTVDPRRKEKINRYKAPKNQGQSGGAN. A helical transmembrane segment spans residues 80-96; the sequence is VLSSFMLSVSAVVMSYL.

It belongs to the Asterix family.

It localises to the membrane. The chain is Protein Asterix from Drosophila melanogaster (Fruit fly).